The primary structure comprises 210 residues: ATP-dependent Clp protease proteolytic subunit (210 aa).

The Nucleophile role is filled by serine 106. Residue histidine 131 is part of the active site.

It belongs to the peptidase S14 family. In terms of assembly, fourteen ClpP subunits assemble into 2 heptameric rings which stack back to back to give a disk-like structure with a central cavity, resembling the structure of eukaryotic proteasomes.

It localises to the cytoplasm. It catalyses the reaction Hydrolysis of proteins to small peptides in the presence of ATP and magnesium. alpha-casein is the usual test substrate. In the absence of ATP, only oligopeptides shorter than five residues are hydrolyzed (such as succinyl-Leu-Tyr-|-NHMec, and Leu-Tyr-Leu-|-Tyr-Trp, in which cleavage of the -Tyr-|-Leu- and -Tyr-|-Trp bonds also occurs).. Functionally, cleaves peptides in various proteins in a process that requires ATP hydrolysis. Has a chymotrypsin-like activity. Plays a major role in the degradation of misfolded proteins. The protein is ATP-dependent Clp protease proteolytic subunit of Azospirillum brasilense.